The chain runs to 278 residues: Small ribosomal subunit protein uS2 (278 aa).

The tract at residues 235–278 (QRRKDHGEGGQQAAGGGRGQRDEINVYQGGRGGRGGGPRQQQAS) is disordered. Composition is skewed to gly residues over residues 243 to 252 (GGQQAAGGGR) and 263 to 272 (GGRGGRGGGP).

It belongs to the universal ribosomal protein uS2 family.

The chain is Small ribosomal subunit protein uS2 from Sorangium cellulosum (strain So ce56) (Polyangium cellulosum (strain So ce56)).